A 257-amino-acid polypeptide reads, in one-letter code: Imidazole glycerol phosphate synthase subunit HisF (257 aa).

Catalysis depends on residues Asp12 and Asp131.

This sequence belongs to the HisA/HisF family. As to quaternary structure, heterodimer of HisH and HisF.

It is found in the cytoplasm. The catalysed reaction is 5-[(5-phospho-1-deoxy-D-ribulos-1-ylimino)methylamino]-1-(5-phospho-beta-D-ribosyl)imidazole-4-carboxamide + L-glutamine = D-erythro-1-(imidazol-4-yl)glycerol 3-phosphate + 5-amino-1-(5-phospho-beta-D-ribosyl)imidazole-4-carboxamide + L-glutamate + H(+). It functions in the pathway amino-acid biosynthesis; L-histidine biosynthesis; L-histidine from 5-phospho-alpha-D-ribose 1-diphosphate: step 5/9. Its function is as follows. IGPS catalyzes the conversion of PRFAR and glutamine to IGP, AICAR and glutamate. The HisF subunit catalyzes the cyclization activity that produces IGP and AICAR from PRFAR using the ammonia provided by the HisH subunit. The polypeptide is Imidazole glycerol phosphate synthase subunit HisF (Burkholderia lata (strain ATCC 17760 / DSM 23089 / LMG 22485 / NCIMB 9086 / R18194 / 383)).